The sequence spans 142 residues: Type IV pilus subunit protein TapA (142 aa).

The propeptide at M1–G6 is leader sequence. N-methylphenylalanine is present on F7. A helical transmembrane segment spans residues F7 to L27.

Belongs to the N-Me-Phe pilin family.

It is found in the membrane. Its function is as follows. Major component of the type IV (TAP) pilus. Aeromonas hydrophila possesses two distinct families of type IV pili: the bundle-forming pilus (Bfp) and the type IV pilus (Tap). This chain is Type IV pilus subunit protein TapA (tapA), found in Aeromonas hydrophila.